Consider the following 74-residue polypeptide: Protein SlyX homolog (74 aa).

The protein belongs to the SlyX family.

The polypeptide is Protein SlyX homolog (Neisseria meningitidis serogroup C (strain 053442)).